The following is a 443-amino-acid chain: ATP-dependent protease ATPase subunit HslU (443 aa).

ATP-binding positions include Ile-18, 60 to 65 (GVGKTE), Asp-256, Glu-321, and Arg-393.

Belongs to the ClpX chaperone family. HslU subfamily. As to quaternary structure, a double ring-shaped homohexamer of HslV is capped on each side by a ring-shaped HslU homohexamer. The assembly of the HslU/HslV complex is dependent on binding of ATP.

Its subcellular location is the cytoplasm. ATPase subunit of a proteasome-like degradation complex; this subunit has chaperone activity. The binding of ATP and its subsequent hydrolysis by HslU are essential for unfolding of protein substrates subsequently hydrolyzed by HslV. HslU recognizes the N-terminal part of its protein substrates and unfolds these before they are guided to HslV for hydrolysis. The chain is ATP-dependent protease ATPase subunit HslU from Shigella dysenteriae serotype 1 (strain Sd197).